The sequence spans 169 residues: 16S rRNA aminocarboxypropyltransferase (169 aa).

Residues T15, V65, L88, and T107 each contribute to the S-adenosyl-L-methionine site.

This sequence belongs to the TDD superfamily. TSR3 family.

Its subcellular location is the cytoplasm. It carries out the reaction an N(1)-methylpseudouridine in rRNA + S-adenosyl-L-methionine = N(1)-methyl-N(3)-[(3S)-3-amino-3-carboxypropyl]pseudouridine in rRNA + S-methyl-5'-thioadenosine + H(+). Aminocarboxypropyltransferase that catalyzes the aminocarboxypropyl transfer on pseudouridine corresponding to position 914 in M.jannaschii 16S rRNA. It constitutes the last step in biosynthesis of the hypermodified N1-methyl-N3-(3-amino-3-carboxypropyl) pseudouridine (m1acp3-Psi). This Methanopyrus kandleri (strain AV19 / DSM 6324 / JCM 9639 / NBRC 100938) protein is 16S rRNA aminocarboxypropyltransferase.